The following is a 335-amino-acid chain: Phosphatidylglycerol--prolipoprotein diacylglyceryl transferase (335 aa).

The next 3 membrane-spanning stretches (helical) occupy residues 31–51, 67–87, and 100–120; these read IYWYGIIFVCGFLIAILTYSL, YIFLAIPMTIIGARLWSLAIG, and LAIQGGVIAGVLSAAVYFPLI. Arginine 163 provides a ligand contact to a 1,2-diacyl-sn-glycero-3-phospho-(1'-sn-glycerol). A run of 3 helical transmembrane segments spans residues 213–233, 235–255, and 277–297; these read PLFLYESFFNVIVFVFIYFGL, YIKQLKIGFISMSYFFFYGVT, and SLLLIFGVLGALYVQFIAPLL.

This sequence belongs to the Lgt family.

The protein resides in the cell membrane. It carries out the reaction L-cysteinyl-[prolipoprotein] + a 1,2-diacyl-sn-glycero-3-phospho-(1'-sn-glycerol) = an S-1,2-diacyl-sn-glyceryl-L-cysteinyl-[prolipoprotein] + sn-glycerol 1-phosphate + H(+). It functions in the pathway protein modification; lipoprotein biosynthesis (diacylglyceryl transfer). In terms of biological role, catalyzes the transfer of the diacylglyceryl group from phosphatidylglycerol to the sulfhydryl group of the N-terminal cysteine of a prolipoprotein, the first step in the formation of mature lipoproteins. This is Phosphatidylglycerol--prolipoprotein diacylglyceryl transferase from Ureaplasma parvum serovar 3 (strain ATCC 27815 / 27 / NCTC 11736).